Reading from the N-terminus, the 1037-residue chain is Nucleoporin NUP120 (1037 aa).

Leucine-zipper regions lie at residues 131–152 (LQLP…WFHL) and 290–311 (LLPL…SGIL). Thr-417 is modified (phosphothreonine).

Component of the nuclear pore complex (NPC). NPC constitutes the exclusive means of nucleocytoplasmic transport. NPCs allow the passive diffusion of ions and small molecules and the active, nuclear transport receptor-mediated bidirectional transport of macromolecules such as proteins, RNAs, ribonucleoparticles (RNPs), and ribosomal subunits across the nuclear envelope. Due to its 8-fold rotational symmetry, all subunits are present with 8 copies or multiples thereof. NUP120 is part of the heptameric 0.5 MDa autoassembling NUP84 NPC subcomplex (NUP84, NUP85, NUP120, NUP133, NUP145C, SEC13 and SEH1).

It is found in the nucleus. Its subcellular location is the nuclear pore complex. The protein resides in the nucleus membrane. In terms of biological role, functions as a component of the nuclear pore complex (NPC). NPC components, collectively referred to as nucleoporins (NUPs), can play the role of both NPC structural components and of docking or interaction partners for transiently associated nuclear transport factors. NUP120 is involved in nuclear poly(A)+ RNA and pre-ribosome export, in GSP1 nuclear import, in NPC assembly and distribution, as well as in nuclear envelope organization. This chain is Nucleoporin NUP120 (NUP120), found in Saccharomyces cerevisiae (strain ATCC 204508 / S288c) (Baker's yeast).